Here is a 316-residue protein sequence, read N- to C-terminus: MPVNGARRSDERMFMTAIDFSDVSKTYGDKAVVSALSFRVSPGECFGLLGPNGAGKSTIARMILGMTAPDAGKITVLGVPVPAQARLARKGIGVVPQFDNLEPEFTVRENLLVYSRYFGMNTRKVEAVMSSLLEFARLESKVNARVSELSGGMKRRLTLARALINDPQLLVMDEPTTGLDPHARHLIWERLRSLLTRGKTIILTTHFMEEAERLCDRLCVLEGGRSIAEGRPHDLIDELIGCEVIEIYGGDPHELESLVGPYADRIEISGETLFCYVSDPEQVRVRLRQRAGLRILQRPPNLEDVFLRLTGREMEK.

The 231-residue stretch at 18-248 (IDFSDVSKTY…LIGCEVIEIY (231 aa)) folds into the ABC transporter domain. An ATP-binding site is contributed by 50-57 (GPNGAGKS).

This sequence belongs to the ABC transporter superfamily. Lipooligosaccharide exporter (TC 3.A.1.102) family. In terms of assembly, the complex is composed of two ATP-binding proteins (NodI) and two transmembrane proteins (NodJ).

Its subcellular location is the cell inner membrane. In terms of biological role, part of the ABC transporter complex NodIJ involved in the export of the nodulation factors (Nod factors), the bacterial signal molecules that induce symbiosis and subsequent nodulation induction. Nod factors are LCO (lipo-chitin oligosaccharide), a modified beta-1,4-linked N-acetylglucosamine oligosaccharide. This subunit is responsible for energy coupling to the transport system. This Rhizobium etli (strain ATCC 51251 / DSM 11541 / JCM 21823 / NBRC 15573 / CFN 42) protein is Nod factor export ATP-binding protein I.